Reading from the N-terminus, the 403-residue chain is F-box protein At2g40925 (403 aa).

The F-box domain maps to 21–71; the sequence is NRHDCEIPPDLMIEILIRLPTKSFMRFKCVSKQWSPLISGRYFCNRLFTCV.

The sequence is that of F-box protein At2g40925 from Arabidopsis thaliana (Mouse-ear cress).